The following is an 860-amino-acid chain: Leucine--tRNA ligase (860 aa).

The short motif at 42–52 is the 'HIGH' region element; it reads PYPSGRLHMGH. A 'KMSKS' region motif is present at residues 619–623; the sequence is KMSKS. Position 622 (Lys-622) interacts with ATP.

Belongs to the class-I aminoacyl-tRNA synthetase family.

It localises to the cytoplasm. It carries out the reaction tRNA(Leu) + L-leucine + ATP = L-leucyl-tRNA(Leu) + AMP + diphosphate. The protein is Leucine--tRNA ligase of Actinobacillus succinogenes (strain ATCC 55618 / DSM 22257 / CCUG 43843 / 130Z).